A 465-amino-acid chain; its full sequence is Phosphomethylpyrimidine synthase (465 aa).

Residues N80, M109, Y139, H175, 195–197 (SRG), 236–239 (DSLR), and E275 contribute to the substrate site. H279 contacts Zn(2+). Y302 is a binding site for substrate. Residue H343 participates in Zn(2+) binding. [4Fe-4S] cluster-binding residues include C423, C426, and C431.

Belongs to the ThiC family. The cofactor is [4Fe-4S] cluster.

It carries out the reaction 5-amino-1-(5-phospho-beta-D-ribosyl)imidazole + S-adenosyl-L-methionine = 4-amino-2-methyl-5-(phosphooxymethyl)pyrimidine + CO + 5'-deoxyadenosine + formate + L-methionine + 3 H(+). It functions in the pathway cofactor biosynthesis; thiamine diphosphate biosynthesis. Its function is as follows. Catalyzes the synthesis of the hydroxymethylpyrimidine phosphate (HMP-P) moiety of thiamine from aminoimidazole ribotide (AIR) in a radical S-adenosyl-L-methionine (SAM)-dependent reaction. In Synechococcus sp. (strain CC9311), this protein is Phosphomethylpyrimidine synthase.